The chain runs to 121 residues: Putative iron-sulfur cluster insertion protein ErpA (121 aa).

Positions 49, 113, and 115 each coordinate iron-sulfur cluster.

It belongs to the HesB/IscA family. Homodimer. It depends on iron-sulfur cluster as a cofactor.

In terms of biological role, required for insertion of 4Fe-4S clusters. This chain is Putative iron-sulfur cluster insertion protein ErpA, found in Polaromonas sp. (strain JS666 / ATCC BAA-500).